The sequence spans 261 residues: Ethanolamine ammonia-lyase small subunit (261 aa).

Positions 157, 178, and 207 each coordinate adenosylcob(III)alamin.

Belongs to the EutC family. As to quaternary structure, the basic unit is a heterodimer which dimerizes to form tetramers. The heterotetramers trimerize; 6 large subunits form a core ring with 6 small subunits projecting outwards. Requires adenosylcob(III)alamin as cofactor.

Its subcellular location is the bacterial microcompartment. The enzyme catalyses ethanolamine = acetaldehyde + NH4(+). Its pathway is amine and polyamine degradation; ethanolamine degradation. Functionally, catalyzes the deamination of various vicinal amino-alcohols to oxo compounds. Allows this organism to utilize ethanolamine as the sole source of nitrogen and carbon in the presence of external vitamin B12. In Rhodopseudomonas palustris (strain BisA53), this protein is Ethanolamine ammonia-lyase small subunit.